A 332-amino-acid chain; its full sequence is Biotin synthase (332 aa).

A Radical SAM core domain is found at histidine 53–arginine 282. Cysteine 71, cysteine 75, and cysteine 78 together coordinate [4Fe-4S] cluster. Residues cysteine 115, cysteine 147, cysteine 207, and arginine 277 each contribute to the [2Fe-2S] cluster site.

It belongs to the radical SAM superfamily. Biotin synthase family. In terms of assembly, homodimer. [4Fe-4S] cluster serves as cofactor. The cofactor is [2Fe-2S] cluster.

It catalyses the reaction (4R,5S)-dethiobiotin + (sulfur carrier)-SH + 2 reduced [2Fe-2S]-[ferredoxin] + 2 S-adenosyl-L-methionine = (sulfur carrier)-H + biotin + 2 5'-deoxyadenosine + 2 L-methionine + 2 oxidized [2Fe-2S]-[ferredoxin]. The protein operates within cofactor biosynthesis; biotin biosynthesis; biotin from 7,8-diaminononanoate: step 2/2. Catalyzes the conversion of dethiobiotin (DTB) to biotin by the insertion of a sulfur atom into dethiobiotin via a radical-based mechanism. This Bacillus cereus (strain AH187) protein is Biotin synthase.